Reading from the N-terminus, the 317-residue chain is Sulfate adenylyltransferase subunit 2 (317 aa).

Disordered stretches follow at residues 1 to 21 (MPDSRPDTELSNPQSAKAPLD) and 298 to 317 (RAIDRDQSGSMEKKKREGYF).

It belongs to the PAPS reductase family. CysD subfamily. As to quaternary structure, heterodimer composed of CysD, the smaller subunit, and CysN.

It catalyses the reaction sulfate + ATP + H(+) = adenosine 5'-phosphosulfate + diphosphate. It participates in sulfur metabolism; hydrogen sulfide biosynthesis; sulfite from sulfate: step 1/3. Functionally, with CysN forms the ATP sulfurylase (ATPS) that catalyzes the adenylation of sulfate producing adenosine 5'-phosphosulfate (APS) and diphosphate, the first enzymatic step in sulfur assimilation pathway. APS synthesis involves the formation of a high-energy phosphoric-sulfuric acid anhydride bond driven by GTP hydrolysis by CysN coupled to ATP hydrolysis by CysD. The protein is Sulfate adenylyltransferase subunit 2 of Rhizobium johnstonii (strain DSM 114642 / LMG 32736 / 3841) (Rhizobium leguminosarum bv. viciae).